A 240-amino-acid polypeptide reads, in one-letter code: uncharacterized protein (240 aa).

The region spanning 2–223 (VRIQDLSLAF…GNAPRELHQA (222 aa)) is the ABC transporter domain. 34 to 41 (GSSGVGKS) provides a ligand contact to ATP.

It belongs to the ABC transporter superfamily.

This is an uncharacterized protein from Haemophilus influenzae (strain ATCC 51907 / DSM 11121 / KW20 / Rd).